Here is a 313-residue protein sequence, read N- to C-terminus: Porphobilinogen deaminase (313 aa).

At Cys242 the chain carries S-(dipyrrolylmethanemethyl)cysteine.

This sequence belongs to the HMBS family. As to quaternary structure, monomer. Requires dipyrromethane as cofactor.

It catalyses the reaction 4 porphobilinogen + H2O = hydroxymethylbilane + 4 NH4(+). Its pathway is porphyrin-containing compound metabolism; protoporphyrin-IX biosynthesis; coproporphyrinogen-III from 5-aminolevulinate: step 2/4. Its function is as follows. Tetrapolymerization of the monopyrrole PBG into the hydroxymethylbilane pre-uroporphyrinogen in several discrete steps. This Proteus mirabilis (strain HI4320) protein is Porphobilinogen deaminase.